A 135-amino-acid chain; its full sequence is uncharacterized protein (135 aa).

The helical transmembrane segment at 35–55 (VVLVLIGATIILVVISVLVVS) threads the bilayer.

The protein localises to the membrane. This is an uncharacterized protein from Saccharomyces cerevisiae (strain ATCC 204508 / S288c) (Baker's yeast).